Consider the following 241-residue polypeptide: Dihydropteridine reductase (241 aa).

11-35 (LVYGGRGALGSRCVQAFRARNWWVA) is a binding site for NADP(+). 4 positions are modified to N6-succinyllysine: lysine 70, lysine 76, lysine 93, and lysine 99. Catalysis depends on tyrosine 147, which acts as the Proton acceptor. The residue at position 170 (serine 170) is a Phosphoserine.

This sequence belongs to the short-chain dehydrogenases/reductases (SDR) family. Homodimer.

It catalyses the reaction 5,6,7,8-tetrahydropteridine + NAD(+) = 6,7-dihydropteridine + NADH + H(+). The enzyme catalyses 5,6,7,8-tetrahydropteridine + NADP(+) = 6,7-dihydropteridine + NADPH + H(+). Functionally, catalyzes the conversion of quinonoid dihydrobiopterin into tetrahydrobiopterin. This Rattus norvegicus (Rat) protein is Dihydropteridine reductase (Qdpr).